The sequence spans 246 residues: 1-(5-phosphoribosyl)-5-[(5-phosphoribosylamino)methylideneamino] imidazole-4-carboxamide isomerase (246 aa).

The active-site Proton acceptor is Asp10. Asp135 serves as the catalytic Proton donor.

Belongs to the HisA/HisF family.

The protein localises to the cytoplasm. The enzyme catalyses 1-(5-phospho-beta-D-ribosyl)-5-[(5-phospho-beta-D-ribosylamino)methylideneamino]imidazole-4-carboxamide = 5-[(5-phospho-1-deoxy-D-ribulos-1-ylimino)methylamino]-1-(5-phospho-beta-D-ribosyl)imidazole-4-carboxamide. It functions in the pathway amino-acid biosynthesis; L-histidine biosynthesis; L-histidine from 5-phospho-alpha-D-ribose 1-diphosphate: step 4/9. This chain is 1-(5-phosphoribosyl)-5-[(5-phosphoribosylamino)methylideneamino] imidazole-4-carboxamide isomerase, found in Methanosarcina mazei (strain ATCC BAA-159 / DSM 3647 / Goe1 / Go1 / JCM 11833 / OCM 88) (Methanosarcina frisia).